The chain runs to 179 residues: Peptide methionine sulfoxide reductase MsrA (179 aa).

Residue cysteine 14 is part of the active site.

Belongs to the MsrA Met sulfoxide reductase family.

The enzyme catalyses L-methionyl-[protein] + [thioredoxin]-disulfide + H2O = L-methionyl-(S)-S-oxide-[protein] + [thioredoxin]-dithiol. It carries out the reaction [thioredoxin]-disulfide + L-methionine + H2O = L-methionine (S)-S-oxide + [thioredoxin]-dithiol. In terms of biological role, has an important function as a repair enzyme for proteins that have been inactivated by oxidation. Catalyzes the reversible oxidation-reduction of methionine sulfoxide in proteins to methionine. The polypeptide is Peptide methionine sulfoxide reductase MsrA (Nitrobacter winogradskyi (strain ATCC 25391 / DSM 10237 / CIP 104748 / NCIMB 11846 / Nb-255)).